The sequence spans 443 residues: Xaa-Pro dipeptidase (443 aa).

The Mn(2+) site is built by D246, D257, H339, E384, and E423.

The protein belongs to the peptidase M24B family. Bacterial-type prolidase subfamily. It depends on Mn(2+) as a cofactor.

It catalyses the reaction Xaa-L-Pro dipeptide + H2O = an L-alpha-amino acid + L-proline. Its function is as follows. Splits dipeptides with a prolyl residue in the C-terminal position. This is Xaa-Pro dipeptidase from Shigella flexneri serotype 5b (strain 8401).